The chain runs to 259 residues: BTB/POZ domain-containing protein KCTD4 (259 aa).

The segment at 1-25 (MERKINRREKEKEYEGKHNSLEDTD) is disordered. One can recognise a BTB domain in the interval 33-134 (TLMTLNVGGY…EVKSRWEKEQ (102 aa)).

The polypeptide is BTB/POZ domain-containing protein KCTD4 (KCTD4) (Homo sapiens (Human)).